Here is a 428-residue protein sequence, read N- to C-terminus: Flotillin-2a (428 aa).

S-palmitoyl cysteine attachment occurs at residues C4, C19, and C20.

Belongs to the band 7/mec-2 family. Flotillin subfamily. Heterooligomer; Heterooligomerizes with ic complex of flotillins 1 and 2. Post-translationally, palmitoylation may be required for the formation of higher order complexes and for neurite outgrowth in cultured neural stem cells.

The protein resides in the membrane. Its subcellular location is the endosome. In terms of biological role, may play a role in axon growth and regeneration. May be involved in epidermal cell adhesion and epidermal structure and function. The polypeptide is Flotillin-2a (flot2a) (Danio rerio (Zebrafish)).